The following is a 244-amino-acid chain: rRNA adenine N-6-methyltransferase (244 aa).

Positions 11, 13, 38, 59, 84, and 101 each coordinate S-adenosyl-L-methionine.

It belongs to the class I-like SAM-binding methyltransferase superfamily. rRNA adenine N(6)-methyltransferase family.

The catalysed reaction is adenosine(2085) in 23S rRNA + 2 S-adenosyl-L-methionine = N(6)-dimethyladenosine(2085) in 23S rRNA + 2 S-adenosyl-L-homocysteine + 2 H(+). Its function is as follows. This protein produces a dimethylation of the adenine residue at position 2085 in 23S rRNA, resulting in reduced affinity between ribosomes and macrolide-lincosamide-streptogramin B antibiotics. The chain is rRNA adenine N-6-methyltransferase (ermC') from Bacillus subtilis.